A 96-amino-acid polypeptide reads, in one-letter code: Protein Vpr (96 aa).

A homooligomerization region spans residues 1-42 (MEQAPEDQGPQREPYNEWTLELLEELKREAVRHFPRPWLHGL). A phosphoserine; by host mark is found at S79, S94, and S96.

It belongs to the HIV-1 VPR protein family. In terms of assembly, homooligomer, may form homodimer. Interacts with p6-gag region of the Pr55 Gag precursor protein through a (Leu-X-X)4 motif near the C-terminus of the P6gag protein. Interacts with host UNG. May interact with host RAD23A/HHR23A. Interacts with host VPRBP/DCAF1, leading to hijack the CUL4A-RBX1-DDB1-DCAF1/VPRBP complex, mediating ubiquitination of host proteins such as TERT and ZGPAT and arrest of the cell cycle in G2 phase. Post-translationally, phosphorylated on several residues by host. These phosphorylations regulate VPR activity for the nuclear import of the HIV-1 pre-integration complex.

It is found in the virion. The protein resides in the host nucleus. The protein localises to the host extracellular space. In terms of biological role, during virus replication, may deplete host UNG protein, and incude G2-M cell cycle arrest. Acts by targeting specific host proteins for degradation by the 26S proteasome, through association with the cellular CUL4A-DDB1 E3 ligase complex by direct interaction with host VPRPB/DCAF-1. Cell cycle arrest reportedly occurs within hours of infection and is not blocked by antiviral agents, suggesting that it is initiated by the VPR carried into the virion. Additionally, VPR induces apoptosis in a cell cycle dependent manner suggesting that these two effects are mechanistically linked. Detected in the serum and cerebrospinal fluid of AIDS patient, VPR may also induce cell death to bystander cells. Functionally, during virus entry, plays a role in the transport of the viral pre-integration (PIC) complex to the host nucleus. This function is crucial for viral infection of non-dividing macrophages. May act directly at the nuclear pore complex, by binding nucleoporins phenylalanine-glycine (FG)-repeat regions. The sequence is that of Protein Vpr from Human immunodeficiency virus type 1 group M subtype C (isolate 92BR025) (HIV-1).